A 606-amino-acid chain; its full sequence is Granule-bound starch synthase 1, chloroplastic/amyloplastic (606 aa).

The N-terminal 76 residues, 1-76, are a transit peptide targeting the chloroplast; the sequence is MSALTTSQLA…GSRRFPSVVV (76 aa). Residues 29–67 form a disordered region; the sequence is RHGFQGLKPRSPAGGDASSLSVTTSARATPKQQRSVQRG. The span at 46–66 shows a compositional bias: polar residues; it reads SSLSVTTSARATPKQQRSVQR. Lysine 97 is a binding site for ADP-alpha-D-glucose.

Belongs to the glycosyltransferase 1 family. Bacterial/plant glycogen synthase subfamily.

It is found in the plastid. The protein resides in the chloroplast. It localises to the amyloplast. The catalysed reaction is an NDP-alpha-D-glucose + [(1-&gt;4)-alpha-D-glucosyl](n) = [(1-&gt;4)-alpha-D-glucosyl](n+1) + a ribonucleoside 5'-diphosphate + H(+). It functions in the pathway glycan biosynthesis; starch biosynthesis. Functionally, required for the synthesis of amylose in endosperm. The protein is Granule-bound starch synthase 1, chloroplastic/amyloplastic (WAXY) of Oryza sativa (Rice).